The chain runs to 80 residues: Small ribosomal subunit protein bS18 (80 aa).

Belongs to the bacterial ribosomal protein bS18 family. In terms of assembly, part of the 30S ribosomal subunit. Forms a tight heterodimer with protein bS6.

Its function is as follows. Binds as a heterodimer with protein bS6 to the central domain of the 16S rRNA, where it helps stabilize the platform of the 30S subunit. This Clostridium botulinum (strain 657 / Type Ba4) protein is Small ribosomal subunit protein bS18.